A 63-amino-acid chain; its full sequence is DNA-directed RNA polymerase 7 kDa subunit (63 aa).

The protein belongs to the poxviridae DNA-directed RNA polymerase 7 kDa subunit family. In terms of assembly, the DNA-dependent RNA polymerase used for intermediate and late genes expression consists of eight subunits 147 kDa, 133 kDa, 35 kDa, 30 kDa, 22 kDa, 19 kDa, 18 kDa and 7 kDa totalling more than 500 kDa in mass. The same holoenzyme, with the addition of the transcription-specificity factor RAP94, is used for early gene expression.

Its subcellular location is the virion. The catalysed reaction is RNA(n) + a ribonucleoside 5'-triphosphate = RNA(n+1) + diphosphate. Its function is as follows. Part of the DNA-dependent RNA polymerase which catalyzes the transcription of viral DNA into RNA using the four ribonucleoside triphosphates as substrates. Responsible for the transcription of early, intermediate and late genes. DNA-dependent RNA polymerase associates with the early transcription factor (ETF) thereby allowing the early genes transcription. Late transcription, and probably also intermediate transcription, require newly synthesized RNA polymerase. The protein is DNA-directed RNA polymerase 7 kDa subunit (RPO7) of Myxoma virus (strain Lausanne) (MYXV).